The chain runs to 682 residues: Glutamine--fructose-6-phosphate aminotransferase [isomerizing] 2 (682 aa).

The active-site For GATase activity is the Cys2. The 287-residue stretch at 2-288 folds into the Glutamine amidotransferase type-2 domain; sequence CGIFAYMNYR…DDDIAAVADG (287 aa). Ser244 is subject to Phosphoserine. 2 consecutive SIS domains span residues 360–499 and 531–672; these read HLKE…DRIS and LALE…VDFP. Residues 377-378, 422-424, Thr427, and His578 each bind substrate; these read TS and SQS.

It carries out the reaction D-fructose 6-phosphate + L-glutamine = D-glucosamine 6-phosphate + L-glutamate. It participates in nucleotide-sugar biosynthesis; UDP-N-acetyl-alpha-D-glucosamine biosynthesis; alpha-D-glucosamine 6-phosphate from D-fructose 6-phosphate: step 1/1. Functionally, controls the flux of glucose into the hexosamine pathway. Most likely involved in regulating the availability of precursors for N- and O-linked glycosylation of proteins. The sequence is that of Glutamine--fructose-6-phosphate aminotransferase [isomerizing] 2 (Gfpt2) from Mus musculus (Mouse).